Consider the following 1039-residue polypeptide: MKRHLNTCYRLVWNHMTGAFVVASELARARGKRGGVAVALSLAAVTSLPVLAADIVVHPGETVNGGTLANHDNQIVFGTTNGMTISTGLEYGPDNEANTGGQWVQDGGTANKTTVTSGGLQRVNPGGSVSDTVISAGGGQSLQGRAVNTTLNGGEQWMHEGAIATGTVINDKGWQVVKPGTVATDTVVNTGAEGGPDAENGDTGQFVRGDAVRTTINKNGRQIVRAEGTANTTVVYAGGDQTVHGHALDTTLNGGYQYVHNGGTASDTVVNSDGWQIVKNGGVAGNTTVNQKGRLQVDAGGTATNVTLKQGGALVTSTAATVTGINRLGAFSVVEGKADNVVLENGGRLDVLTGHTATNTRVDDGGTLDVRNGGTATTVSMGNGGVLLADSGAAVSGTRSDGKAFSIGGGQADALMLEKGSSFTLNAGDTATDTTVNGGLFTARGGTLAGTTTLNNGAILTLSGKTVNNDTLTIREGDALLQGGSLTGNGSVEKSGSGTLTVSNTTLTQKAVNLNEGTLTLNDSTVTTDVIAQRGTALKLTGSTVLNGAIDPTNVTLASGATWNIPDNATVQSVVDDLSHAGQIHFTSTRTGKFVPATLKVKNLNGQNGTISLRVRPDMAQNNADRLVIDGGRATGKTILNLVNAGNSASGLATSGKGIQVVEAINGATTEEGAFVQGNRLQAGAFNYSLNRDSDESWYLRSENAYRAEVPLYASMLTQAMDYDRIVAGSRSHQTGVNGENNSVRLSIQGGHLGHDNNGGIARGATPESSGSYGFVRLEGDLMRTEVAGMSVTAGVYGAAGHSSVDVKDDDGSRAGTVRDDAGSLGGYLNLVHTSSGLWADIVAQGTRHSMKASSDNNDFRARGWGWLGSLETGLPFSITDNLMLEPQLQYTWQGLSLDDGKDNAGYVKFGHGSAQHVRAGFRLGSHNDMTFGEGTSSRAPLRDSAKHSVSELPVNWWVQPSVIRTFSSRGDMRVGTSTAGSGMTFSPSQNGTSLDLQAGLEARVRENITLGVQAGYAHSVSGSSAEGYNGQATLNVTF.

Positions 1–52 (MKRHLNTCYRLVWNHMTGAFVVASELARARGKRGGVAVALSLAAVTSLPVLA) are cleaved as a signal peptide. In terms of domain architecture, Autotransporter spans 737-1039 (VNGENNSVRL…NGQATLNVTF (303 aa)).

Interaction with TamA of the translocation and assembly module (TAM) initiates insertion in the outer membrane.

It localises to the periplasm. It is found in the secreted. The protein resides in the cell surface. Its subcellular location is the cell outer membrane. Functionally, controls colony form variation and autoaggregation. May function as an adhesin. The sequence is that of Antigen 43 (flu) from Escherichia coli (strain K12).